The sequence spans 435 residues: Cell adhesion molecule 2 (435 aa).

An N-terminal signal peptide occupies residues 1-24 (MIWKRSAVLRFYSVCGLLLLGSQG). Over 25-367 (QFPLTQNVTV…SLAGQNGPDH (343 aa)) the chain is Extracellular. The Ig-like V-type domain occupies 27–119 (PLTQNVTVVE…PVKTSKAYLT (93 aa)). Asn31 and Asn51 each carry an N-linked (GlcNAc...) asparagine glycan. 3 disulfides stabilise this stretch: Cys44/Cys104, Cys146/Cys203, and Cys248/Cys296. 2 Ig-like C2-type domains span residues 127 to 219 (PQIS…VAMQ) and 227 to 312 (PSVK…YVLI). The N-linked (GlcNAc...) asparagine glycan is linked to Asn291. The span at 341-351 (TTSPSTSASSS) shows a compositional bias: low complexity. Residues 341–360 (TTSPSTSASSSSRRDPNSLA) are disordered. A helical membrane pass occupies residues 368-388 (ALIGGIVAVVVFVTLCSIFLL). At 389–435 (GRYLARHKGTYLTNEAKGAEDAPDADTAIINAEGSQVNAEEKKEYFI) the chain is on the cytoplasmic side. Residue Ser423 is modified to Phosphoserine.

It belongs to the nectin family. In terms of processing, glycosylation at Asn-51 reduces adhesive binding.

Its subcellular location is the cell membrane. It localises to the synapse. The protein resides in the cell projection. It is found in the axon. Adhesion molecule that engages in homo- and heterophilic interactions with the other nectin-like family members, leading to cell aggregation. Important for synapse organization, providing regulated trans-synaptic adhesion. Preferentially binds to oligodendrocytes. The protein is Cell adhesion molecule 2 (Cadm2) of Rattus norvegicus (Rat).